The chain runs to 582 residues: Hemagglutinin-neuraminidase (582 aa).

At 1–34 the chain is on the intravirion side; sequence MEPSKLFTMSDNATFAPGPVINAADKKTFRTCFR. The chain crosses the membrane as a helical; Signal-anchor for type II membrane protein span at residues 35–55; it reads ILVLSVQAVTLILVIVTLGEL. The Virion surface portion of the chain corresponds to 56-582; the sequence is VRMINDQGLS…LPVLTRLTIT (527 aa). N-linked (GlcNAc...) asparagine; by host glycosylation occurs at Asn-127. Intrachain disulfides connect Cys-178/Cys-202, Cys-192/Cys-253, and Cys-244/Cys-257. Positions 240–245 are involved in neuraminidase activity; it reads NRKSCS. N-linked (GlcNAc...) asparagine; by host glycans are attached at residues Asn-284 and Asn-329. 3 cysteine pairs are disulfide-bonded: Cys-350–Cys-471, Cys-382–Cys-392, and Cys-465–Cys-475. Asn-400, Asn-448, and Asn-464 each carry an N-linked (GlcNAc...) asparagine; by host glycan. Asn-507 carries an N-linked (GlcNAc...) asparagine; by host glycan. Residues Cys-545 and Cys-556 are joined by a disulfide bond.

Belongs to the paramyxoviruses hemagglutinin-neuraminidase family. As to quaternary structure, homotetramer; composed of disulfide-linked homodimers. Interacts with F protein trimer.

The protein localises to the virion membrane. Its subcellular location is the host cell membrane. It carries out the reaction Hydrolysis of alpha-(2-&gt;3)-, alpha-(2-&gt;6)-, alpha-(2-&gt;8)- glycosidic linkages of terminal sialic acid residues in oligosaccharides, glycoproteins, glycolipids, colominic acid and synthetic substrates.. Functionally, attaches the virus to alpha-2,3-linked sialic acid-containing cell receptors and thereby initiating infection. Binding of HN protein to the receptor induces a conformational change that allows the F protein to trigger virion/cell membranes fusion. Binds to the glycan motifs sialyl Lewis (SLe) and GM2 ganglioside (GM2-glycan). Its function is as follows. Neuraminidase (sialidase) activity ensures the efficient spread of the virus by dissociating the mature virions from the neuraminic acid containing glycoproteins. The polypeptide is Hemagglutinin-neuraminidase (HN) (Mumps virus genotype B (strain Miyahara vaccine) (MuV)).